The chain runs to 412 residues: 5,5'-dehydrodivanillate O-demethylase ferredoxin reductase subunit (412 aa).

Residues A14, K49, V82, R130, D279, and V298 each contribute to the FAD site.

It belongs to the FAD-dependent oxidoreductase family. Monomer. The three-component monooxygenase is composed of an oxygenase (LigXa), a ferredoxin (LigXc) and a ferredoxin reductase (LigXd). The cofactor is FAD.

It carries out the reaction 5,5'-dehydrodivanillate + NADH + O2 + H(+) = 2,2',3-trihydroxy-3'-methoxy-5,5'-dicarboxybiphenyl + formaldehyde + NAD(+) + H2O. Its function is as follows. Involved in the catabolism of 5,5'-dehydrodivanillate (DDVA), an intermediate in the biodegradation of lignin. Part of a three-component monooxygenase that catalyzes the O-demethylation of DDVA, leading to the formation of 2,2',3-trihydroxy-3'-methoxy-5,5'-dicarboxybiphenyl (OH-DDVA). LigXd probably transfers the electrons from NADH to LigXc. This chain is 5,5'-dehydrodivanillate O-demethylase ferredoxin reductase subunit, found in Sphingobium sp. (strain NBRC 103272 / SYK-6).